A 292-amino-acid chain; its full sequence is MSWIERILAKPKINKRRGVPEGVWSKCTACGNIIYKADLERSLNVCPKCDHHMRVTGRSRLDIFLDKDNREEIGTDLEPKDVLRFKDSKKYKDRIAAAQKSTGENDALIAEKGTVKGVPLVAVAFDFNFMGGSMASVVGAKFVLAAEVCLKHRIPLVCFSASGGARMQEALMSLMQMAKTSAALARMSEEGLPFISILTDPTMGGVSASLAMLGDIHIAEPKALIGFAGPRVIEQTVRQTLPEGFQRAEFLLEHGAIDMITDRRDMRDTVARLLAKMQNLPSTEATEVSVNE.

Residues 23–292 (VWSKCTACGN…TEATEVSVNE (270 aa)) enclose the CoA carboxyltransferase N-terminal domain. C27, C30, C46, and C49 together coordinate Zn(2+). The C4-type zinc-finger motif lies at 27–49 (CTACGNIIYKADLERSLNVCPKC).

This sequence belongs to the AccD/PCCB family. Acetyl-CoA carboxylase is a heterohexamer composed of biotin carboxyl carrier protein (AccB), biotin carboxylase (AccC) and two subunits each of ACCase subunit alpha (AccA) and ACCase subunit beta (AccD). It depends on Zn(2+) as a cofactor.

The protein localises to the cytoplasm. It carries out the reaction N(6)-carboxybiotinyl-L-lysyl-[protein] + acetyl-CoA = N(6)-biotinyl-L-lysyl-[protein] + malonyl-CoA. It functions in the pathway lipid metabolism; malonyl-CoA biosynthesis; malonyl-CoA from acetyl-CoA: step 1/1. Its function is as follows. Component of the acetyl coenzyme A carboxylase (ACC) complex. Biotin carboxylase (BC) catalyzes the carboxylation of biotin on its carrier protein (BCCP) and then the CO(2) group is transferred by the transcarboxylase to acetyl-CoA to form malonyl-CoA. This Idiomarina loihiensis (strain ATCC BAA-735 / DSM 15497 / L2-TR) protein is Acetyl-coenzyme A carboxylase carboxyl transferase subunit beta.